A 352-amino-acid polypeptide reads, in one-letter code: Glycerol-3-phosphate dehydrogenase [NAD(P)+] (352 aa).

Positions 11, 12, 32, and 105 each coordinate NADPH. Sn-glycerol 3-phosphate contacts are provided by Lys-105, Gly-133, and Ser-135. Residue Ala-137 participates in NADPH binding. Sn-glycerol 3-phosphate-binding residues include Lys-188, Asp-241, Ser-251, Arg-252, and Asn-253. Lys-188 acts as the Proton acceptor in catalysis. Arg-252 lines the NADPH pocket. Residues Val-276 and Glu-278 each contribute to the NADPH site.

It belongs to the NAD-dependent glycerol-3-phosphate dehydrogenase family.

It localises to the cytoplasm. The enzyme catalyses sn-glycerol 3-phosphate + NAD(+) = dihydroxyacetone phosphate + NADH + H(+). The catalysed reaction is sn-glycerol 3-phosphate + NADP(+) = dihydroxyacetone phosphate + NADPH + H(+). It functions in the pathway membrane lipid metabolism; glycerophospholipid metabolism. Its function is as follows. Catalyzes the reduction of the glycolytic intermediate dihydroxyacetone phosphate (DHAP) to sn-glycerol 3-phosphate (G3P), the key precursor for phospholipid synthesis. This is Glycerol-3-phosphate dehydrogenase [NAD(P)+] from Desulfitobacterium hafniense (strain Y51).